Reading from the N-terminus, the 109-residue chain is Probable WRKY transcription factor 43 (109 aa).

A DNA-binding region (WRKY) is located at residues 24–89 (SDADILDDGY…YEGIHNHPCE (66 aa)).

It belongs to the WRKY group II-c family.

The protein localises to the nucleus. Its function is as follows. Transcription factor. Interacts specifically with the W box (5'-(T)TGAC[CT]-3'), a frequently occurring elicitor-responsive cis-acting element. This chain is Probable WRKY transcription factor 43 (WRKY43), found in Arabidopsis thaliana (Mouse-ear cress).